A 309-amino-acid polypeptide reads, in one-letter code: Olfactory receptor 4B1 (309 aa).

The Extracellular portion of the chain corresponds to 1-23 (MASTSNVTELIFTGLFQDPAVQS). A glycan (N-linked (GlcNAc...) asparagine) is linked at asparagine 6. The chain crosses the membrane as a helical span at residues 24-47 (VCFVVFLPVYLATVVGNGLIVLTV). Residues 48–55 (SISKSLDS) lie on the Cytoplasmic side of the membrane. Residues 56 to 77 (PMYFFLSCLSLVEISYSSTIAP) traverse the membrane as a helical segment. At 78 to 98 (KFIIDLLAKIKTISLEGCLTQ) the chain is on the extracellular side. A disulfide bridge connects residues cysteine 95 and cysteine 187. Residues 99–118 (IFFFHFFGVAEILLIVVMAY) traverse the membrane as a helical segment. Residues 119–137 (DCYVAICKPLHYMNIISRQ) lie on the Cytoplasmic side of the membrane. A helical membrane pass occupies residues 138-156 (LCHLLVAGSWLGGFCHSII). Over 157–193 (QILVIIQLPFCGPNVIDHYFCDLQPLFKLACTDTFME) the chain is Extracellular. The chain crosses the membrane as a helical span at residues 194–217 (GVIVLANSGLFSVFSFLILVSSYI). Over 218–233 (VILVNLRNHSAEGRHK) the chain is Cytoplasmic. Residues 234–256 (ALSTCASHITVVILFFGPAIFLY) traverse the membrane as a helical segment. At 257–267 (MRPSSTFTEDK) the chain is on the extracellular side. The chain crosses the membrane as a helical span at residues 268–287 (LVAVFYTVITPMLNPIIYTL). Over 288-309 (RNAEVKIAIRRLWSKKENPGRE) the chain is Cytoplasmic.

This sequence belongs to the G-protein coupled receptor 1 family.

The protein localises to the cell membrane. Odorant receptor. The polypeptide is Olfactory receptor 4B1 (OR4B1) (Homo sapiens (Human)).